Reading from the N-terminus, the 153-residue chain is Myosin regulatory light chain LC-2, mantle muscle (153 aa).

Ala-1 bears the Blocked amino end (Ala) mark. EF-hand domains are found at residues 13-48 and 82-117; these read RQMQ…LGRV and DPED…MGDN. Ca(2+) contacts are provided by Asp-26, Asp-28, Asp-30, and Asp-37.

Its function is as follows. In molluscan muscle, calcium regulation is associated with myosin rather than with actin. Muscle myosin contains two types of light chains: the catalytic light chain, essential for ATPase activity, and the regulatory light chain, a calcium-binding protein responsible for Ca(2+) dependent binding and Ca(2+) dependent Mg-ATPase activity. This is Myosin regulatory light chain LC-2, mantle muscle from Todarodes pacificus (Japanese flying squid).